The sequence spans 280 residues: Dexamethasone-induced Ras-related protein 1 (280 aa).

Cysteine 11 bears the S-nitrosocysteine mark. A GTP-binding site is contributed by 31-38 (GSSKVGKT). The Effector region motif lies at 53 to 61 (YTPTIEDFH). Residues 78–82 (DTSGN) and 145–148 (NKGD) contribute to the GTP site. The residue at position 277 (cysteine 277) is a Cysteine methyl ester. Residue cysteine 277 is the site of S-farnesyl cysteine attachment. Residues 278 to 280 (VIS) constitute a propeptide, removed in mature form.

The protein belongs to the small GTPase superfamily. RasD family. As to quaternary structure, forms a ternary complex with CAPON and NOS1. Component of a complex, at least composed of APBB1, RASD1/DEXRAS1 and APP. Interacts with APBB1/FE65. Forms. Post-translationally, S-nitrosylation stimulates guanine-nucleotide exchange activity. In terms of tissue distribution, prominently found in brain at both mRNA and protein levels. Moderate expression in testis and lung. Slightly expressed in heart, spleen, skeletal muscle, liver and kidney.

The protein localises to the cell membrane. It is found in the cytoplasm. Its subcellular location is the perinuclear region. The protein resides in the nucleus. In terms of biological role, small GTPase. Negatively regulates the transcription regulation activity of the APBB1/FE65-APP complex via its interaction with APBB1/FE65. This Rattus norvegicus (Rat) protein is Dexamethasone-induced Ras-related protein 1 (Rasd1).